We begin with the raw amino-acid sequence, 463 residues long: L-seryl-tRNA(Sec) selenium transferase (463 aa).

Lys295 carries the post-translational modification N6-(pyridoxal phosphate)lysine.

Belongs to the SelA family. Homodecamer; pentamer of dimers. Binds only one seryl-tRNA(Sec) per dimer. It depends on pyridoxal 5'-phosphate as a cofactor.

The protein resides in the cytoplasm. The catalysed reaction is L-seryl-tRNA(Sec) + selenophosphate + H(+) = L-selenocysteinyl-tRNA(Sec) + phosphate. It participates in aminoacyl-tRNA biosynthesis; selenocysteinyl-tRNA(Sec) biosynthesis; selenocysteinyl-tRNA(Sec) from L-seryl-tRNA(Sec) (bacterial route): step 1/1. Functionally, converts seryl-tRNA(Sec) to selenocysteinyl-tRNA(Sec) required for selenoprotein biosynthesis. This Edwardsiella ictaluri (strain 93-146) protein is L-seryl-tRNA(Sec) selenium transferase.